A 581-amino-acid chain; its full sequence is Cytosolic Fe-S cluster assembly factor nar-1 (581 aa).

The [4Fe-4S] cluster site is built by cysteine 20, cysteine 68, cysteine 71, cysteine 74, cysteine 215, cysteine 270, cysteine 457, and cysteine 461.

Belongs to the NARF family.

Its function is as follows. Component of the cytosolic Fe/S protein assembly machinery. Required for maturation of extramitochondrial Fe/S proteins. May play a role in the transfer of pre-assembled Fe/S clusters to target apoproteins. The chain is Cytosolic Fe-S cluster assembly factor nar-1 (nar-1) from Neurospora crassa (strain ATCC 24698 / 74-OR23-1A / CBS 708.71 / DSM 1257 / FGSC 987).